A 184-amino-acid polypeptide reads, in one-letter code: Elongation factor P (184 aa).

The protein belongs to the elongation factor P family.

Its subcellular location is the cytoplasm. The protein operates within protein biosynthesis; polypeptide chain elongation. Its function is as follows. Involved in peptide bond synthesis. Stimulates efficient translation and peptide-bond synthesis on native or reconstituted 70S ribosomes in vitro. Probably functions indirectly by altering the affinity of the ribosome for aminoacyl-tRNA, thus increasing their reactivity as acceptors for peptidyl transferase. The chain is Elongation factor P from Polaromonas naphthalenivorans (strain CJ2).